We begin with the raw amino-acid sequence, 354 residues long: Deoxyribonuclease-2-beta (354 aa).

An N-terminal signal peptide occupies residues 1–22 (MTAKPLRTVLSLLFFALSGVLG). 9 N-linked (GlcNAc...) asparagine glycosylation sites follow: Asn-70, Asn-77, Asn-95, Asn-98, Asn-114, Asn-129, Asn-208, Asn-271, and Asn-319.

It belongs to the DNase II family. As to expression, highly expressed in the eye lens. Detected in liver, but not in the other tissues tested.

It is found in the lysosome. The catalysed reaction is Endonucleolytic cleavage to nucleoside 3'-phosphates and 3'-phosphooligonucleotide end-products.. Functionally, hydrolyzes DNA under acidic conditions. Does not require divalent cations for activity. Participates in the degradation of nuclear DNA during lens cell differentiation. The chain is Deoxyribonuclease-2-beta (Dnase2b) from Mus musculus (Mouse).